The primary structure comprises 309 residues: MKPTFLEFRHLKTLLALKETGSVSLAAKRVYLTQSALSHQIKLIEEQFGLPLFERKSNPLRFTSAGERLIRLANEVMPKVIDAERDLARVKHGDAGQLRIAVECHTCFDWLMPAMDEFRQHWGLVELDIVSGFHTDPVGLLLSHRADWAIVSEIEHNDDVIFKPLFSYEMVGICSKNHSLAEKDIWEAEDFIDETWVTYPVPDDMLDLWRKVLKSKGINPTRRTTELTIAMIQLVASRRGIATIPYWAALPYLEKGYVVARKVTKEGLYSNLYAAIRKEDESLSYLEDFYQTVKSQSFSTLPGLSVLNL.

The 58-residue stretch at 6–63 folds into the HTH lysR-type domain; sequence LEFRHLKTLLALKETGSVSLAAKRVYLTQSALSHQIKLIEEQFGLPLFERKSNPLRFT. The segment at residues 23–42 is a DNA-binding region (H-T-H motif); that stretch reads VSLAAKRVYLTQSALSHQIK.

This sequence belongs to the LysR transcriptional regulatory family.

It is found in the cytoplasm. Control of the last step in methionine biosynthesis; MetR is a positive activator of the metA, metE and metH genes. The protein is HTH-type transcriptional regulator MetR (metR) of Haemophilus influenzae (strain ATCC 51907 / DSM 11121 / KW20 / Rd).